A 334-amino-acid polypeptide reads, in one-letter code: Photosystem II assembly protein Ycf48 (334 aa).

The N-terminal stretch at 1–22 (MAKMLKLWRLVLLAAFSLLLMA) is a signal peptide.

It belongs to the Ycf48 family. Part of early PSII assembly complexes which includes D1 (psbA) and PsbI; not found in mature PSII. Binds to the lumenal side of PSII complexes. Interacts with YidC.

Its subcellular location is the cellular thylakoid lumen. In terms of biological role, a factor required for optimal assembly of photosystem II (PSII), acting in the early stages of PSII assembly. Also plays a role in replacement of photodamaged D1 (psbA). Assists YidC in synthesis of chlorophyll-binding proteins. This chain is Photosystem II assembly protein Ycf48, found in Synechococcus sp. (strain JA-3-3Ab) (Cyanobacteria bacterium Yellowstone A-Prime).